We begin with the raw amino-acid sequence, 284 residues long: MFNASDRVQVLSEALPYIQSFAGRTVVVKYGGAAMKDSTLKATVIRDVVFMACVGLRPVLVHGGGPEINLWLEKLGIEPQFMKGLRVTDAPTMDVVEMVLVGRVNKELVSLINQAGGSAVGVCGKDGKLLTARPQGESGIGFVGEVASVNPQLIHNLLDGGHIPIVSSVATDEEGQVYNINADTVAGELAAALDAEKLILLTDTPGILQDYKDATSLIHKLDIRQARELIAAEVVAGGMIPKVTCCIRSLAQGIQAAHIIDGRAPHALLLEIFTDSGIGTMITA.

Substrate contacts are provided by residues Gly-64–Gly-65, Arg-86, and Asn-179.

Belongs to the acetylglutamate kinase family. ArgB subfamily.

It localises to the cytoplasm. The catalysed reaction is N-acetyl-L-glutamate + ATP = N-acetyl-L-glutamyl 5-phosphate + ADP. It participates in amino-acid biosynthesis; L-arginine biosynthesis; N(2)-acetyl-L-ornithine from L-glutamate: step 2/4. Functionally, catalyzes the ATP-dependent phosphorylation of N-acetyl-L-glutamate. In Acaryochloris marina (strain MBIC 11017), this protein is Acetylglutamate kinase.